The sequence spans 387 residues: MSRFFSTRQAVGGSTPQPDLYLLGAAVALMGLGWVMVGSASVAIADSRFGQPTYYLWRQGLFLLLGLVTAFGVWRIRLAFWEKLGPVMLLLGLGLLLLTLIPGIGVEVNGSRRWLALGPIRLQPSELAKLFMVIYLSGYLVRRSAEVRTIRGFLFPVGVFAMAGLLLLLEPDFGAVVVLFATLLGMLFLGGARLWHFLLLAALGGASLAALAWYSPYRMQRLTSFLDPWADPLNSGYQLTQALIAFGRGEWLGVGLGNSIQKLFYLPEAHTDFLYAVLAEELGLMGSLAVIALFVVFIYRVLLIGRAAERAGRTFGAHLAYGLGIWIGLQAFINLGVNMGVLPTKGLTLPLMSAGGSSSIVTCVAVALILRVDLETRFPKVARRSVK.

The next 9 membrane-spanning stretches (helical) occupy residues 20 to 40, 61 to 81, 86 to 106, 149 to 169, 172 to 192, 194 to 214, 284 to 304, 322 to 342, and 349 to 369; these read LYLLGAAVALMGLGWVMVGSA, LFLLLGLVTAFGVWRIRLAFW, PVMLLLGLGLLLLTLIPGIGV, TIRGFLFPVGVFAMAGLLLLL, DFGAVVVLFATLLGMLFLGGA, LWHFLLLAALGGASLAALAWY, LMGSLAVIALFVVFIYRVLLI, GLGIWIGLQAFINLGVNMGVL, and LPLMSAGGSSSIVTCVAVALI.

Belongs to the SEDS family. FtsW subfamily.

It is found in the cell inner membrane. It catalyses the reaction [GlcNAc-(1-&gt;4)-Mur2Ac(oyl-L-Ala-gamma-D-Glu-L-Lys-D-Ala-D-Ala)](n)-di-trans,octa-cis-undecaprenyl diphosphate + beta-D-GlcNAc-(1-&gt;4)-Mur2Ac(oyl-L-Ala-gamma-D-Glu-L-Lys-D-Ala-D-Ala)-di-trans,octa-cis-undecaprenyl diphosphate = [GlcNAc-(1-&gt;4)-Mur2Ac(oyl-L-Ala-gamma-D-Glu-L-Lys-D-Ala-D-Ala)](n+1)-di-trans,octa-cis-undecaprenyl diphosphate + di-trans,octa-cis-undecaprenyl diphosphate + H(+). It functions in the pathway cell wall biogenesis; peptidoglycan biosynthesis. In terms of biological role, peptidoglycan polymerase that is essential for cell division. The polypeptide is Probable peptidoglycan glycosyltransferase FtsW (Nitrosococcus halophilus (strain Nc4)).